Here is a 156-residue protein sequence, read N- to C-terminus: Ribosomal RNA large subunit methyltransferase H (156 aa).

Residues Leu73, Gly104, and 123-128 (ISSMTL) each bind S-adenosyl-L-methionine.

The protein belongs to the RNA methyltransferase RlmH family. As to quaternary structure, homodimer.

The protein localises to the cytoplasm. It catalyses the reaction pseudouridine(1915) in 23S rRNA + S-adenosyl-L-methionine = N(3)-methylpseudouridine(1915) in 23S rRNA + S-adenosyl-L-homocysteine + H(+). In terms of biological role, specifically methylates the pseudouridine at position 1915 (m3Psi1915) in 23S rRNA. The polypeptide is Ribosomal RNA large subunit methyltransferase H (Burkholderia lata (strain ATCC 17760 / DSM 23089 / LMG 22485 / NCIMB 9086 / R18194 / 383)).